Reading from the N-terminus, the 674-residue chain is DNA ligase (674 aa).

Residues 34–38, 83–84, and Glu-117 each bind NAD(+); these read DFEFD and SL. The active-site N6-AMP-lysine intermediate is the Lys-119. Positions 140, 184, 297, and 321 each coordinate NAD(+). 4 residues coordinate Zn(2+): Cys-415, Cys-418, Cys-433, and Cys-439. A BRCT domain is found at 598 to 674; that stretch reads LVNNNFEGQS…IDEDEFERML (77 aa).

Belongs to the NAD-dependent DNA ligase family. LigA subfamily. Requires Mg(2+) as cofactor. It depends on Mn(2+) as a cofactor.

The catalysed reaction is NAD(+) + (deoxyribonucleotide)n-3'-hydroxyl + 5'-phospho-(deoxyribonucleotide)m = (deoxyribonucleotide)n+m + AMP + beta-nicotinamide D-nucleotide.. In terms of biological role, DNA ligase that catalyzes the formation of phosphodiester linkages between 5'-phosphoryl and 3'-hydroxyl groups in double-stranded DNA using NAD as a coenzyme and as the energy source for the reaction. It is essential for DNA replication and repair of damaged DNA. This is DNA ligase from Chlorobaculum tepidum (strain ATCC 49652 / DSM 12025 / NBRC 103806 / TLS) (Chlorobium tepidum).